Consider the following 259-residue polypeptide: Phosphatidylglycerol--prolipoprotein diacylglyceryl transferase (259 aa).

The next 4 membrane-spanning stretches (helical) occupy residues 9–29 (IGPF…VLAV), 47–67 (IDFI…YYVI), 83–103 (IWNG…VLFI), and 109–129 (VLNP…AQAI). R131 serves as a coordination point for a 1,2-diacyl-sn-glycero-3-phospho-(1'-sn-glycerol). Helical transmembrane passes span 167 to 187 (MPTF…ICYL), 194 to 214 (LLEG…RFVI), and 227 to 247 (LRVS…FVIL).

This sequence belongs to the Lgt family.

The protein localises to the cell membrane. The catalysed reaction is L-cysteinyl-[prolipoprotein] + a 1,2-diacyl-sn-glycero-3-phospho-(1'-sn-glycerol) = an S-1,2-diacyl-sn-glyceryl-L-cysteinyl-[prolipoprotein] + sn-glycerol 1-phosphate + H(+). It functions in the pathway protein modification; lipoprotein biosynthesis (diacylglyceryl transfer). In terms of biological role, catalyzes the transfer of the diacylglyceryl group from phosphatidylglycerol to the sulfhydryl group of the N-terminal cysteine of a prolipoprotein, the first step in the formation of mature lipoproteins. This is Phosphatidylglycerol--prolipoprotein diacylglyceryl transferase from Streptococcus uberis (strain ATCC BAA-854 / 0140J).